The sequence spans 763 residues: Phosphoglycerol transferase I (763 aa).

Helical transmembrane passes span 1–21 (MSEL…AWKA), 26–46 (WWFA…ITLY), 77–97 (ILPG…LGWI), and 108–128 (FGYS…SPAF).

The protein belongs to the OpgB family.

The protein resides in the cell inner membrane. The catalysed reaction is a phosphatidylglycerol + a membrane-derived-oligosaccharide D-glucose = a 1,2-diacyl-sn-glycerol + a membrane-derived-oligosaccharide 6-(glycerophospho)-D-glucose.. Its pathway is glycan metabolism; osmoregulated periplasmic glucan (OPG) biosynthesis. Functionally, transfers a phosphoglycerol residue from phosphatidylglycerol to the membrane-bound nascent glucan backbones. The chain is Phosphoglycerol transferase I from Escherichia fergusonii (strain ATCC 35469 / DSM 13698 / CCUG 18766 / IAM 14443 / JCM 21226 / LMG 7866 / NBRC 102419 / NCTC 12128 / CDC 0568-73).